A 232-amino-acid chain; its full sequence is Ubiquinone biosynthesis O-methyltransferase (232 aa).

The S-adenosyl-L-methionine site is built by Arg36, Gly55, Asp76, and Leu120.

It belongs to the methyltransferase superfamily. UbiG/COQ3 family.

The enzyme catalyses a 3-demethylubiquinol + S-adenosyl-L-methionine = a ubiquinol + S-adenosyl-L-homocysteine + H(+). It carries out the reaction a 3-(all-trans-polyprenyl)benzene-1,2-diol + S-adenosyl-L-methionine = a 2-methoxy-6-(all-trans-polyprenyl)phenol + S-adenosyl-L-homocysteine + H(+). It participates in cofactor biosynthesis; ubiquinone biosynthesis. Functionally, O-methyltransferase that catalyzes the 2 O-methylation steps in the ubiquinone biosynthetic pathway. This Pseudomonas aeruginosa (strain LESB58) protein is Ubiquinone biosynthesis O-methyltransferase.